The sequence spans 344 residues: Heat-inducible transcription repressor HrcA (344 aa).

This sequence belongs to the HrcA family.

In terms of biological role, negative regulator of class I heat shock genes (grpE-dnaK-dnaJ and groELS operons). Prevents heat-shock induction of these operons. The chain is Heat-inducible transcription repressor HrcA from Streptococcus pyogenes serotype M1.